We begin with the raw amino-acid sequence, 301 residues long: Protoheme IX farnesyltransferase (301 aa).

Transmembrane regions (helical) follow at residues 16–36 (VVAL…PGMP), 41–61 (IQSG…AAAI), 93–113 (VFAG…VNLI), 114–134 (TAVL…VYLK), 141–161 (IVIG…AVTG), 172–192 (SLLV…LAIF), 217–237 (QILL…ATGM), 238–258 (SGVF…WYAW), and 273–293 (FGYS…DHWL).

Belongs to the UbiA prenyltransferase family. Protoheme IX farnesyltransferase subfamily.

It is found in the cell inner membrane. The catalysed reaction is heme b + (2E,6E)-farnesyl diphosphate + H2O = Fe(II)-heme o + diphosphate. Its pathway is porphyrin-containing compound metabolism; heme O biosynthesis; heme O from protoheme: step 1/1. Converts heme B (protoheme IX) to heme O by substitution of the vinyl group on carbon 2 of heme B porphyrin ring with a hydroxyethyl farnesyl side group. This chain is Protoheme IX farnesyltransferase, found in Xylella fastidiosa (strain Temecula1 / ATCC 700964).